Reading from the N-terminus, the 485-residue chain is UDP-N-acetylmuramate--L-alanine ligase (485 aa).

112–118 (GTHGKTT) lines the ATP pocket.

This sequence belongs to the MurCDEF family.

Its subcellular location is the cytoplasm. It catalyses the reaction UDP-N-acetyl-alpha-D-muramate + L-alanine + ATP = UDP-N-acetyl-alpha-D-muramoyl-L-alanine + ADP + phosphate + H(+). It participates in cell wall biogenesis; peptidoglycan biosynthesis. Its function is as follows. Cell wall formation. This Variovorax paradoxus (strain S110) protein is UDP-N-acetylmuramate--L-alanine ligase.